The sequence spans 380 residues: Protein RecA (380 aa).

Residue 65–72 (GPESSGKT) participates in ATP binding. Residues 329 to 380 (DATGEETSETDDQAKEAKDKGTAKNGSKGQSKSTKATPAETALDLGDQPTEK) form a disordered region. Residues 340–350 (DQAKEAKDKGT) are compositionally biased toward basic and acidic residues. The segment covering 352-364 (KNGSKGQSKSTKA) has biased composition (polar residues).

Belongs to the RecA family.

Its subcellular location is the cytoplasm. Functionally, can catalyze the hydrolysis of ATP in the presence of single-stranded DNA, the ATP-dependent uptake of single-stranded DNA by duplex DNA, and the ATP-dependent hybridization of homologous single-stranded DNAs. It interacts with LexA causing its activation and leading to its autocatalytic cleavage. This chain is Protein RecA, found in Lactiplantibacillus plantarum (strain ATCC BAA-793 / NCIMB 8826 / WCFS1) (Lactobacillus plantarum).